We begin with the raw amino-acid sequence, 539 residues long: Phosphoenolpyruvate carboxykinase (ATP) (539 aa).

Residues Arg64, Tyr206, and Lys212 each contribute to the substrate site. ATP contacts are provided by residues Lys212, His231, and Gly247 to Thr255. 2 residues coordinate Mn(2+): Lys212 and His231. Asp268 is a Mn(2+) binding site. ATP is bound by residues Glu296, Arg332, Arg448–Ile449, and Thr454. Arg332 lines the substrate pocket.

This sequence belongs to the phosphoenolpyruvate carboxykinase (ATP) family. As to quaternary structure, monomer. It depends on Mn(2+) as a cofactor.

The protein resides in the cytoplasm. The enzyme catalyses oxaloacetate + ATP = phosphoenolpyruvate + ADP + CO2. It participates in carbohydrate biosynthesis; gluconeogenesis. Involved in the gluconeogenesis. Catalyzes the conversion of oxaloacetate (OAA) to phosphoenolpyruvate (PEP) through direct phosphoryl transfer between the nucleoside triphosphate and OAA. The polypeptide is Phosphoenolpyruvate carboxykinase (ATP) (Salmonella agona (strain SL483)).